We begin with the raw amino-acid sequence, 382 residues long: Alkanesulfonate monooxygenase (382 aa).

This sequence belongs to the SsuD family.

It carries out the reaction an alkanesulfonate + FMNH2 + O2 = an aldehyde + FMN + sulfite + H2O + 2 H(+). In terms of biological role, catalyzes the desulfonation of aliphatic sulfonates. The sequence is that of Alkanesulfonate monooxygenase from Pseudomonas putida (strain GB-1).